The primary structure comprises 69 residues: MCDASCDEEIISRRTPTFSPKLFRKSRELSPIKPVRTPTPPAPTPPPMCFSEELQRKFQEKKLLPVYDD.

The tract at residues 22 to 48 is disordered; the sequence is LFRKSRELSPIKPVRTPTPPAPTPPPM. A compositionally biased stretch (pro residues) spans 37-48; that stretch reads TPTPPAPTPPPM.

This is an uncharacterized protein from Lepidoptera (butterflies and moths).